Here is a 213-residue protein sequence, read N- to C-terminus: Putative amidate substrates transporter protein (213 aa).

6 helical membrane passes run 4–20 (VGLF…GLML), 32–48 (LNFF…TVLI), 56–72 (AVIF…FTYL), 116–132 (VIWL…FLLL), 146–162 (VAVA…AFLI), and 172–188 (LPAA…VVLA).

It belongs to the AmiS/UreI family.

Its subcellular location is the cell membrane. Functionally, possible transporter that might be responsible for the adsorption of amidase substrates or release of their hydrolysis products. The sequence is that of Putative amidate substrates transporter protein from Mycolicibacterium smegmatis (Mycobacterium smegmatis).